A 320-amino-acid polypeptide reads, in one-letter code: Ferrochelatase (320 aa).

Residues His194 and Glu275 each contribute to the Fe cation site.

The protein belongs to the ferrochelatase family.

The protein resides in the cytoplasm. The catalysed reaction is heme b + 2 H(+) = protoporphyrin IX + Fe(2+). It functions in the pathway porphyrin-containing compound metabolism; protoheme biosynthesis; protoheme from protoporphyrin-IX: step 1/1. In terms of biological role, catalyzes the ferrous insertion into protoporphyrin IX. This Vibrio parahaemolyticus serotype O3:K6 (strain RIMD 2210633) protein is Ferrochelatase.